The sequence spans 128 residues: Small ribosomal subunit protein uS11 (128 aa).

It belongs to the universal ribosomal protein uS11 family. As to quaternary structure, part of the 30S ribosomal subunit. Interacts with proteins S7 and S18. Binds to IF-3.

Its function is as follows. Located on the platform of the 30S subunit, it bridges several disparate RNA helices of the 16S rRNA. Forms part of the Shine-Dalgarno cleft in the 70S ribosome. In Ligilactobacillus salivarius (strain UCC118) (Lactobacillus salivarius), this protein is Small ribosomal subunit protein uS11.